The primary structure comprises 1249 residues: ATP-dependent helicase/nuclease subunit A (1249 aa).

The region spanning 5–482 (TNYTPSQQAV…IVLAENFRSV (478 aa)) is the UvrD-like helicase ATP-binding domain. 26–33 (ASAGSGKT) contributes to the ATP binding site. In terms of domain architecture, UvrD-like helicase C-terminal spans 521–811 (ADMPQTTNLL…NVMTIHGSKG (291 aa)).

It belongs to the helicase family. AddA subfamily. In terms of assembly, heterodimer of AddA and AddB/RexB. Mg(2+) is required as a cofactor.

The enzyme catalyses Couples ATP hydrolysis with the unwinding of duplex DNA by translocating in the 3'-5' direction.. The catalysed reaction is ATP + H2O = ADP + phosphate + H(+). Its function is as follows. The heterodimer acts as both an ATP-dependent DNA helicase and an ATP-dependent, dual-direction single-stranded exonuclease. Recognizes the chi site generating a DNA molecule suitable for the initiation of homologous recombination. The AddA nuclease domain is required for chi fragment generation; this subunit has the helicase and 3' -&gt; 5' nuclease activities. The protein is ATP-dependent helicase/nuclease subunit A of Lactiplantibacillus plantarum (strain ATCC BAA-793 / NCIMB 8826 / WCFS1) (Lactobacillus plantarum).